Reading from the N-terminus, the 283-residue chain is NAD kinase (283 aa).

The active-site Proton acceptor is Asp66. NAD(+) contacts are provided by residues 66-67 (DG), 134-135 (ND), Arg145, Arg163, Asp165, and 176-181 (TAYSMS).

It belongs to the NAD kinase family. Requires a divalent metal cation as cofactor.

The protein localises to the cytoplasm. It catalyses the reaction NAD(+) + ATP = ADP + NADP(+) + H(+). Its function is as follows. Involved in the regulation of the intracellular balance of NAD and NADP, and is a key enzyme in the biosynthesis of NADP. Catalyzes specifically the phosphorylation on 2'-hydroxyl of the adenosine moiety of NAD to yield NADP. The sequence is that of NAD kinase from Chlorobaculum tepidum (strain ATCC 49652 / DSM 12025 / NBRC 103806 / TLS) (Chlorobium tepidum).